Consider the following 248-residue polypeptide: PF03932 family protein CutC (248 aa).

It belongs to the CutC family. As to quaternary structure, homodimer.

Its subcellular location is the cytoplasm. The protein is PF03932 family protein CutC of Escherichia coli (strain SMS-3-5 / SECEC).